The chain runs to 635 residues: Nuclear distribution protein nudE homolog 1 (635 aa).

A coiled-coil region spans residues 14 to 192 (EKEIKHWKSK…TILRDLVTRS (179 aa)). 5 disordered regions span residues 35-63 (ESSL…NKTI), 200-267 (TMAS…LSRD), 279-328 (VLDD…SARA), 389-504 (SRVV…DHDP), and 516-635 (AAQA…TETF). The span at 43–56 (ESSKELEQEMEKEL) shows a compositional bias: basic and acidic residues. Composition is skewed to polar residues over residues 201-224 (MASS…SPIK) and 237-246 (SRQALSSPVT). Positions 280–299 (LDDSPTATTTSAAPTRSSTL) are enriched in low complexity. Composition is skewed to polar residues over residues 314–326 (ASTS…SPSA) and 411–428 (GSPS…TSTP). Over residues 516-541 (AAQASVAKRRTSMSGSGMSHSASHGS) the composition is skewed to low complexity. Polar residues-rich tracts occupy residues 547–571 (SGST…SSMT) and 580–619 (SKRT…PAQT). Residues 620–635 (LSRSRSSSLGSETETF) are compositionally biased toward low complexity.

Belongs to the nudE family. Self-associates. Interacts with PAC1.

It localises to the cytoplasm. The protein localises to the cytoskeleton. Functionally, required for nuclear migration. The chain is Nuclear distribution protein nudE homolog 1 (NDE1) from Mycosarcoma maydis (Corn smut fungus).